The sequence spans 120 residues: MDYEFLRDVTGGVKVRMSMGHEVVGHWFNEEVKDNLSLLDEVEQAARTVKGSERSWQRAGHEYTIWMDGEEVMIRANQLDFSGDEMEEGMSYYDEESLSLCGMEDFLRVVAAYREFVSKA.

It belongs to the UPF0231 family.

The chain is UPF0231 protein YacL from Salmonella agona (strain SL483).